Consider the following 526-residue polypeptide: Arylsulfatase G (526 aa).

The N-terminal stretch at 1–16 (MGWLFLKVLLVGMVFS) is a signal peptide. Residues Asp-44, Asp-45, and Cys-84 each coordinate Ca(2+). The active-site Nucleophile is Cys-84. Cys-84 bears the 3-oxoalanine (Cys) mark. N-linked (GlcNAc...) asparagine glycosylation occurs at Asn-117. Position 137 (Lys-137) interacts with substrate. His-139 is an active-site residue. Substrate is bound at residue Ser-162. Asn-215 is a glycosylation site (N-linked (GlcNAc...) asparagine). Position 251 (His-251) interacts with substrate. Ca(2+) contacts are provided by Asp-302 and Asn-303. N-linked (GlcNAc...) asparagine glycosylation is found at Asn-356 and Asn-497.

Belongs to the sulfatase family. Requires Ca(2+) as cofactor. N-glycosylated with both high mannose and complex type sugars. Post-translationally, the conversion to 3-oxoalanine (also known as C-formylglycine, FGly), of a serine or cysteine residue in prokaryotes and of a cysteine residue in eukaryotes, is critical for catalytic activity. In terms of processing, 63-kDa precursor undergoes proteolytic processing in two steps, yielding two fragments in the first step (apparent molecular masses of 44 and 18 kDa). In the second step, the 44-kDa fragment is processed further to the 34- and 10-kDa chains. The 10-kDa chain is a cleavage product of the 44-kDa fragment but linked to the 18-kDa chain through a disulfide bridge.

It is found in the lysosome. The catalysed reaction is an aryl sulfate + H2O = a phenol + sulfate + H(+). The enzyme catalyses Hydrolysis of the 3-sulfate groups of the N-sulfo-D-glucosamine 3-O-sulfate units of heparin.. Functionally, displays arylsulfatase activity at acidic pH towards the artificial substrate p-nitrocatechol sulfate. Catalyzes the hydrolysis of the 3-sulfate groups of the N-sulfo-D-glucosamine 3-O-sulfate units of heparin. In Rattus norvegicus (Rat), this protein is Arylsulfatase G (Arsg).